Consider the following 120-residue polypeptide: ATP-dependent Clp protease adapter protein ClpS (120 aa).

Residues 1 to 25 (MHARSEIRLTFNQDRPQSNEDDGSG) form a disordered region.

The protein belongs to the ClpS family. Binds to the N-terminal domain of the chaperone ClpA.

Its function is as follows. Involved in the modulation of the specificity of the ClpAP-mediated ATP-dependent protein degradation. The polypeptide is ATP-dependent Clp protease adapter protein ClpS (Pseudomonas putida (strain W619)).